The sequence spans 312 residues: Calcium-independent mitochondrial carrier protein SCaMC-3L (312 aa).

Solcar repeat units follow at residues 27-113 (GTLW…SKNF), 121-206 (QLFQ…LQCL), and 217-304 (PSGL…MKKT). 6 helical membrane passes run 33 to 50 (LLSG…TAPL), 88 to 107 (GNGI…FSVC), 131 to 144 (SLAV…INPM), 182 to 200 (YLPN…LAVY), 219 to 243 (GLVS…LTLV), and 279 to 298 (GMTP…YLVY).

This sequence belongs to the mitochondrial carrier (TC 2.A.29) family. As to expression, mainly expressed in testis and at lesser levels in brain.

The protein localises to the mitochondrion inner membrane. The catalysed reaction is Mg(2+)(out) + phosphate(in) + ATP(out) = Mg(2+)(in) + phosphate(out) + ATP(in). The enzyme catalyses ADP(out) + phosphate(in) + H(+)(out) = ADP(in) + phosphate(out) + H(+)(in). In terms of biological role, calcium-independent ATP-Mg/Pi exchanger that catalyzes the electroneutral exchange of Mg-ATP or free ADP against an hydrogenphosphate and participates in the net transport of adenine nucleotides across the mitochondria inner membrane. This Mus musculus (Mouse) protein is Calcium-independent mitochondrial carrier protein SCaMC-3L.